Here is a 422-residue protein sequence, read N- to C-terminus: Glutamate-1-semialdehyde 2,1-aminomutase (422 aa).

An N6-(pyridoxal phosphate)lysine modification is found at K264.

Belongs to the class-III pyridoxal-phosphate-dependent aminotransferase family. HemL subfamily. As to quaternary structure, homodimer. Requires pyridoxal 5'-phosphate as cofactor.

It localises to the cytoplasm. It carries out the reaction (S)-4-amino-5-oxopentanoate = 5-aminolevulinate. The protein operates within porphyrin-containing compound metabolism; protoporphyrin-IX biosynthesis; 5-aminolevulinate from L-glutamyl-tRNA(Glu): step 2/2. This is Glutamate-1-semialdehyde 2,1-aminomutase from Clostridium kluyveri (strain ATCC 8527 / DSM 555 / NBRC 12016 / NCIMB 10680 / K1).